A 201-amino-acid chain; its full sequence is MGSTETELKRILSDLNVTPLLLGTYDKRFPGFVSKAKPCPIVNTAFGETGGEHWIAMAWYPPNNSFYMFDPFGFSDQKLKQIYDFEYQGLLRRSALTSSKDRCVQLIRSTDTVQGPNSAGCGLFGGLFLKSFACNPARPRNGNPIIDIVRGVPNERFTDPSSLPILYRNQENMYAFLENNSPYFVSHEREIKRKTAFDYIQ.

Catalysis depends on residues His53, Asp70, and Cys121.

It belongs to the peptidase C5 family. Interacts with protease cofactor pVI-C; this interaction is necessary for protease activation.

It is found in the virion. It localises to the host nucleus. It carries out the reaction Cleaves proteins of the adenovirus and its host cell at two consensus sites: -Yaa-Xaa-Gly-Gly-|-Xaa- and -Yaa-Xaa-Gly-Xaa-|-Gly- (in which Yaa is Met, Ile or Leu, and Xaa is any amino acid).. Requires DNA and protease cofactor for maximal activation. Inside nascent virions, becomes partially activated by binding to the viral DNA, allowing it to cleave the cofactor that binds to the protease and fully activates it. Actin, like the viral protease cofactor, seems to act as a cofactor in the cleavage of cytokeratin 18 and of actin itself. In terms of biological role, cleaves viral precursor proteins (pTP, pIIIa, pVI, pVII, pVIII, and pX) inside newly assembled particles giving rise to mature virions. Protease complexed to its cofactor slides along the viral DNA to specifically locate and cleave the viral precursors. Mature virions have a weakened organization compared to the unmature virions, thereby facilitating subsequent uncoating. Without maturation, the particle lacks infectivity and is unable to uncoat. Late in adenovirus infection, in the cytoplasm, may participate in the cytoskeleton destruction. Cleaves host cell cytoskeletal keratins K7 and K18. This Equine adenovirus B serotype 2 (EAdV-2) protein is Protease.